The sequence spans 246 residues: Octanoyltransferase (246 aa).

The BPL/LPL catalytic domain occupies 54–240; the sequence is DPPPEAVWLL…CLEPNADAAI (187 aa). Residues 96–103, 163–165, and 176–178 each bind substrate; these read RGGEVTHH, AIG, and GVA. Cysteine 194 acts as the Acyl-thioester intermediate in catalysis.

Belongs to the LipB family.

The protein resides in the cytoplasm. The enzyme catalyses octanoyl-[ACP] + L-lysyl-[protein] = N(6)-octanoyl-L-lysyl-[protein] + holo-[ACP] + H(+). The protein operates within protein modification; protein lipoylation via endogenous pathway; protein N(6)-(lipoyl)lysine from octanoyl-[acyl-carrier-protein]: step 1/2. In terms of biological role, catalyzes the transfer of endogenously produced octanoic acid from octanoyl-acyl-carrier-protein onto the lipoyl domains of lipoate-dependent enzymes. Lipoyl-ACP can also act as a substrate although octanoyl-ACP is likely to be the physiological substrate. The polypeptide is Octanoyltransferase (Synechococcus sp. (strain WH7803)).